A 335-amino-acid chain; its full sequence is POU domain, class 5, transcription factor 2 (335 aa).

Residues 1 to 23 (MAGRRSSNVCPFPGNSGGGLEGP) form a disordered region. The region spanning 113–187 (DVSAIQKEME…LLKMWLEEVD (75 aa)) is the POU-specific domain. Residues 205 to 264 (RKRRRASRERRIGSNLEKLFLQCPEPTPQQISYIAGRLRLQKDLVQVWFSNRSQMAGWPT) constitute a DNA-binding region (homeobox).

It belongs to the POU transcription factor family. Class-5 subfamily. Highly restricted to adult testis.

The protein resides in the nucleus. In terms of biological role, transcription factor that binds preferentially to the octamer motif (5'-ATGTTAAT-3'). May exert a regulatory function in meiotic events that are required for terminal differentiation of male germ cell. The chain is POU domain, class 5, transcription factor 2 (Pou5f2) from Rattus norvegicus (Rat).